The following is a 509-amino-acid chain: ATP synthase subunit alpha (509 aa).

169-176 (GDRQTGKT) contributes to the ATP binding site.

Belongs to the ATPase alpha/beta chains family. As to quaternary structure, F-type ATPases have 2 components, CF(1) - the catalytic core - and CF(0) - the membrane proton channel. CF(1) has five subunits: alpha(3), beta(3), gamma(1), delta(1), epsilon(1). CF(0) has three main subunits: a(1), b(2) and c(9-12). The alpha and beta chains form an alternating ring which encloses part of the gamma chain. CF(1) is attached to CF(0) by a central stalk formed by the gamma and epsilon chains, while a peripheral stalk is formed by the delta and b chains.

Its subcellular location is the cell inner membrane. It carries out the reaction ATP + H2O + 4 H(+)(in) = ADP + phosphate + 5 H(+)(out). Its function is as follows. Produces ATP from ADP in the presence of a proton gradient across the membrane. The alpha chain is a regulatory subunit. This chain is ATP synthase subunit alpha, found in Brucella canis (strain ATCC 23365 / NCTC 10854 / RM-666).